The chain runs to 394 residues: Elongation factor Tu 1 (394 aa).

One can recognise a tr-type G domain in the interval 10 to 204 (KPHVNVGTIG…ALDSYIPEPQ (195 aa)). Residues 19–26 (GHVDHGKT) are G1. Residue 19–26 (GHVDHGKT) participates in GTP binding. A Mg(2+)-binding site is contributed by threonine 26. The segment at 60-64 (GITIN) is G2. Residues 81–84 (DCPG) are G3. Residues 81–85 (DCPGH) and 136–139 (NKCD) contribute to the GTP site. A G4 region spans residues 136–139 (NKCD). The segment at 174-176 (SAL) is G5.

This sequence belongs to the TRAFAC class translation factor GTPase superfamily. Classic translation factor GTPase family. EF-Tu/EF-1A subfamily. Monomer.

The protein resides in the cytoplasm. It carries out the reaction GTP + H2O = GDP + phosphate + H(+). Its function is as follows. GTP hydrolase that promotes the GTP-dependent binding of aminoacyl-tRNA to the A-site of ribosomes during protein biosynthesis. The chain is Elongation factor Tu 1 from Shewanella baltica (strain OS195).